A 234-amino-acid chain; its full sequence is Uridylate kinase (234 aa).

9-10 (GS) is an ATP binding site. Residue Gly-43 participates in UMP binding. Gly-44 and Arg-48 together coordinate ATP. UMP contacts are provided by residues Asp-65 and 113–119 (VIPGQTT). ATP is bound by residues Thr-139, Tyr-145, and Asp-148.

This sequence belongs to the UMP kinase family. As to quaternary structure, homohexamer.

It is found in the cytoplasm. The catalysed reaction is UMP + ATP = UDP + ADP. The protein operates within pyrimidine metabolism; CTP biosynthesis via de novo pathway; UDP from UMP (UMPK route): step 1/1. Its activity is regulated as follows. Inhibited by UTP. Its function is as follows. Catalyzes the reversible phosphorylation of UMP to UDP. The protein is Uridylate kinase of Methanococcoides burtonii (strain DSM 6242 / NBRC 107633 / OCM 468 / ACE-M).